A 297-amino-acid polypeptide reads, in one-letter code: Homoserine kinase (297 aa).

82–92 (PLTRGLGSSAS) lines the ATP pocket.

This sequence belongs to the GHMP kinase family. Homoserine kinase subfamily.

The protein localises to the cytoplasm. The catalysed reaction is L-homoserine + ATP = O-phospho-L-homoserine + ADP + H(+). It participates in amino-acid biosynthesis; L-threonine biosynthesis; L-threonine from L-aspartate: step 4/5. Catalyzes the ATP-dependent phosphorylation of L-homoserine to L-homoserine phosphate. This chain is Homoserine kinase, found in Bacillus cereus (strain ATCC 14579 / DSM 31 / CCUG 7414 / JCM 2152 / NBRC 15305 / NCIMB 9373 / NCTC 2599 / NRRL B-3711).